The chain runs to 315 residues: Ribosomal RNA small subunit methyltransferase H (315 aa).

Residues 37-39 (GGH), Asp-57, Phe-83, Asp-105, and Gln-112 each bind S-adenosyl-L-methionine.

It belongs to the methyltransferase superfamily. RsmH family.

It localises to the cytoplasm. The catalysed reaction is cytidine(1402) in 16S rRNA + S-adenosyl-L-methionine = N(4)-methylcytidine(1402) in 16S rRNA + S-adenosyl-L-homocysteine + H(+). Specifically methylates the N4 position of cytidine in position 1402 (C1402) of 16S rRNA. This chain is Ribosomal RNA small subunit methyltransferase H, found in Pseudomonas entomophila (strain L48).